The following is a 250-amino-acid chain: Aquaporin TIP2-2 (250 aa).

2 helical membrane-spanning segments follow: residues 22 to 42 (VAEF…AIAF) and 54 to 74 (AGLV…VSVA). The NPA 1 signature appears at 83–85 (NPA). A run of 3 helical transmembrane segments spans residues 97–119 (TVLT…CLLL), 142–162 (GVVF…ATAA), and 169–189 (LGTI…LAAG). The NPA 2 motif lies at 197-199 (NPA). The helical transmembrane segment at 218–238 (WVGPLIGGGLAGLVYGDVFIG) threads the bilayer.

Belongs to the MIP/aquaporin (TC 1.A.8) family. TIP (TC 1.A.8.10) subfamily.

It is found in the vacuole membrane. Its function is as follows. Aquaporins facilitate the transport of water and small neutral solutes across cell membranes. This chain is Aquaporin TIP2-2 (TIP2-2), found in Zea mays (Maize).